The chain runs to 203 residues: MSQLTLTLLMIVAAYLAGSVSSAVLVCRMRGLPDPRLQGSGNPGATNVLRIGGASSAAMVLFFDMLKGALPTYLAYLMGIDAISLGLIAIAACLGHIYPIFFGFKGGKGVATAFGAMAPIGDDLAICLMASWVVLVLISRYSSLAAIITALLAPLYTWWLDDRFTIPVAMLSTLIIIRHKENIQRLLKGEESKVSRKKRPKAP.

The next 4 membrane-spanning stretches (helical) occupy residues 6 to 26 (LTLLMIVAAYLAGSVSSAVLV), 82 to 102 (AISLGLIAIAACLGHIYPIFF), 118 to 138 (APIGDDLAICLMASWVVLVLI), and 141 to 161 (YSSLAAIITALLAPLYTWWLD).

Belongs to the PlsY family. Probably interacts with PlsX.

Its subcellular location is the cell inner membrane. It carries out the reaction an acyl phosphate + sn-glycerol 3-phosphate = a 1-acyl-sn-glycero-3-phosphate + phosphate. It functions in the pathway lipid metabolism; phospholipid metabolism. Catalyzes the transfer of an acyl group from acyl-phosphate (acyl-PO(4)) to glycerol-3-phosphate (G3P) to form lysophosphatidic acid (LPA). This enzyme utilizes acyl-phosphate as fatty acyl donor, but not acyl-CoA or acyl-ACP. In Shewanella sp. (strain ANA-3), this protein is Glycerol-3-phosphate acyltransferase.